The chain runs to 264 residues: Thymidylate synthase (264 aa).

Residue Arg-21 participates in dUMP binding. His-51 serves as a coordination point for (6R)-5,10-methylene-5,6,7,8-tetrahydrofolate. 126-127 (RR) is a binding site for dUMP. Catalysis depends on Cys-146, which acts as the Nucleophile. Residues 166–169 (RSAD), Asn-177, and 207–209 (HLY) contribute to the dUMP site. Residue Asp-169 participates in (6R)-5,10-methylene-5,6,7,8-tetrahydrofolate binding. Position 263 (Ala-263) interacts with (6R)-5,10-methylene-5,6,7,8-tetrahydrofolate.

The protein belongs to the thymidylate synthase family. Bacterial-type ThyA subfamily. In terms of assembly, homodimer.

The protein resides in the cytoplasm. The enzyme catalyses dUMP + (6R)-5,10-methylene-5,6,7,8-tetrahydrofolate = 7,8-dihydrofolate + dTMP. Its pathway is pyrimidine metabolism; dTTP biosynthesis. Its function is as follows. Catalyzes the reductive methylation of 2'-deoxyuridine-5'-monophosphate (dUMP) to 2'-deoxythymidine-5'-monophosphate (dTMP) while utilizing 5,10-methylenetetrahydrofolate (mTHF) as the methyl donor and reductant in the reaction, yielding dihydrofolate (DHF) as a by-product. This enzymatic reaction provides an intracellular de novo source of dTMP, an essential precursor for DNA biosynthesis. In Legionella pneumophila (strain Paris), this protein is Thymidylate synthase.